The chain runs to 416 residues: UDP-N-acetylglucosamine 1-carboxyvinyltransferase (416 aa).

22–23 is a phosphoenolpyruvate binding site; the sequence is KN. Arg91 provides a ligand contact to UDP-N-acetyl-alpha-D-glucosamine. Residue Cys115 is the Proton donor of the active site. Cys115 carries the 2-(S-cysteinyl)pyruvic acid O-phosphothioketal modification. UDP-N-acetyl-alpha-D-glucosamine contacts are provided by residues 120–124, Asp305, and Ile327; that span reads RPIDL.

This sequence belongs to the EPSP synthase family. MurA subfamily.

It localises to the cytoplasm. The enzyme catalyses phosphoenolpyruvate + UDP-N-acetyl-alpha-D-glucosamine = UDP-N-acetyl-3-O-(1-carboxyvinyl)-alpha-D-glucosamine + phosphate. It functions in the pathway cell wall biogenesis; peptidoglycan biosynthesis. Cell wall formation. Adds enolpyruvyl to UDP-N-acetylglucosamine. The sequence is that of UDP-N-acetylglucosamine 1-carboxyvinyltransferase from Buchnera aphidicola subsp. Acyrthosiphon pisum (strain APS) (Acyrthosiphon pisum symbiotic bacterium).